The sequence spans 362 residues: Patr class I histocompatibility antigen, A-5 alpha chain (362 aa).

The signal sequence occupies residues 1-24 (MQVTAPRTVLLLLSAALALTETWA). Residues 25 to 114 (GSHSMKYFYT…LRGYYNQSEA (90 aa)) are alpha-1. The Extracellular segment spans residues 25 to 308 (GSHSMKYFYT…EPSSQSTIPI (284 aa)). An N-linked (GlcNAc...) asparagine glycan is attached at N110. An alpha-2 region spans residues 115–206 (GSHIIQRMYG…ENGKETLQRA (92 aa)). 2 disulfide bridges follow: C125-C188 and C227-C283. The tract at residues 207-298 (DPPKTHVTHH…GLPKPLTLRW (92 aa)) is alpha-3. Positions 209-295 (PKTHVTHHPI…QHEGLPKPLT (87 aa)) constitute an Ig-like C1-type domain. The connecting peptide stretch occupies residues 299-308 (EPSSQSTIPI). A helical membrane pass occupies residues 309 to 332 (VGIVAGLAVLAVVVIGAVVAAVMC). Residues 333 to 362 (RRKSSGGKGGSYSQAASSDSAQGSDVSLTA) lie on the Cytoplasmic side of the membrane. Positions 336 to 362 (SSGGKGGSYSQAASSDSAQGSDVSLTA) are disordered. S343 bears the Phosphoserine mark. The segment covering 343–362 (SYSQAASSDSAQGSDVSLTA) has biased composition (low complexity). Y344 carries the post-translational modification Phosphotyrosine. S345, S349, S350, S352, S356, and S359 each carry phosphoserine.

It belongs to the MHC class I family. As to quaternary structure, heterodimer of an alpha chain and a beta chain (beta-2-microglobulin).

It is found in the membrane. Functionally, involved in the presentation of foreign antigens to the immune system. In Pan troglodytes (Chimpanzee), this protein is Patr class I histocompatibility antigen, A-5 alpha chain.